We begin with the raw amino-acid sequence, 475 residues long: Ribulose bisphosphate carboxylase large chain (475 aa).

Residues 1–2 (MS) constitute a propeptide that is removed on maturation. P3 bears the N-acetylproline mark. K14 carries the post-translational modification N6,N6,N6-trimethyllysine. Substrate contacts are provided by N123 and T173. K175 serves as the catalytic Proton acceptor. K177 serves as a coordination point for substrate. Mg(2+) is bound by residues K201, D203, and E204. Position 201 is an N6-carboxylysine (K201). Catalysis depends on H294, which acts as the Proton acceptor. Residues R295, H327, and S379 each contribute to the substrate site.

The protein belongs to the RuBisCO large chain family. Type I subfamily. As to quaternary structure, heterohexadecamer of 8 large chains and 8 small chains; disulfide-linked. The disulfide link is formed within the large subunit homodimers. Requires Mg(2+) as cofactor. The disulfide bond which can form in the large chain dimeric partners within the hexadecamer appears to be associated with oxidative stress and protein turnover.

It is found in the plastid. Its subcellular location is the chloroplast. The catalysed reaction is 2 (2R)-3-phosphoglycerate + 2 H(+) = D-ribulose 1,5-bisphosphate + CO2 + H2O. It carries out the reaction D-ribulose 1,5-bisphosphate + O2 = 2-phosphoglycolate + (2R)-3-phosphoglycerate + 2 H(+). RuBisCO catalyzes two reactions: the carboxylation of D-ribulose 1,5-bisphosphate, the primary event in carbon dioxide fixation, as well as the oxidative fragmentation of the pentose substrate in the photorespiration process. Both reactions occur simultaneously and in competition at the same active site. This Spirogyra maxima (Green alga) protein is Ribulose bisphosphate carboxylase large chain.